We begin with the raw amino-acid sequence, 179 residues long: MIIYKDIISGDEVLSDNFKIKEVDGVLYECDCRKYLKRKNEDIQLEGANPSAEEGDDDAGGDGEEVMVHDIEDQFRLVWLKTEEGMKPSKDAFKSHLKTYMKKVLAKLQEKGVPEAEIDAFKKGAPAAVKKILANYDNYDVLMGHSMDGDAMHVLIDFREDGVTPYATLWKHGLEEMKV.

One can recognise a TCTP domain in the interval 1-179; it reads MIIYKDIISG…WKHGLEEMKV (179 aa).

It belongs to the TCTP family.

It is found in the cytoplasm. The protein localises to the cytoskeleton. Involved in protein synthesis. Involved in microtubule stabilization. The protein is Translationally-controlled tumor protein homolog of Aspergillus fumigatus (strain ATCC MYA-4609 / CBS 101355 / FGSC A1100 / Af293) (Neosartorya fumigata).